The primary structure comprises 364 residues: Hepatitis A virus cellular receptor 1 (364 aa).

An N-terminal signal peptide occupies residues 1-20 (MHPQVVILSLILHLADSVAG). The region spanning 21-121 (SVKVGGEAGP…WFNDMKITVS (101 aa)) is the Ig-like V-type domain. At 21–295 (SVKVGGEAGP…SLLTANTTKG (275 aa)) the chain is on the extracellular side. 3 cysteine pairs are disulfide-bonded: C36/C105, C46/C57, and C52/C104. Residue N65 is glycosylated (N-linked (GlcNAc...) asparagine). 12 tandem repeats follow at residues 138–143 (VPTVTT), 144–149 (VRTSTT), 150–155 (VPTTTT), 156–160 (VPMTT), 161–165 (VPTTT), 166–171 (VPTTMS), 172–177 (IPTTTT), 178–183 (VLTTMT), 184–189 (VSTTTS), 190–195 (VPTTTS), 196–201 (IPTTTS), and 202–207 (VPVTTT). The segment at 138–207 (VPTVTTVRTS…TTTSVPVTTT (70 aa)) is 12 X 6 AA approximate tandem repeats of V-P-T-T-T-T]. A disordered region spans residues 216–257 (PLPRQNHEPVATSPSSPQPAETHPTTLQGAIRREPTSSPLYS). Positions 227–243 (TSPSSPQPAETHPTTLQ) are enriched in polar residues. 3 N-linked (GlcNAc...) asparagine glycosylation sites follow: N263, N277, and N291. The chain crosses the membrane as a helical span at residues 296-316 (IYAGVCISVLVLLALLGVIIA). The Cytoplasmic portion of the chain corresponds to 317-364 (KKYFFKKEVQQLSVSFSSLQIKALQNAVEKEVQAEDNIYIENSLYATD). Residues K338 and K346 each participate in a glycyl lysine isopeptide (Lys-Gly) (interchain with G-Cter in ubiquitin) cross-link.

The protein belongs to the immunoglobulin superfamily. TIM family. As to quaternary structure, interacts with STAM. Interacts with SELPLG. In terms of assembly, (Microbial infection) Interacts with hepatitis A virus capsid proteins. (Microbial infection) Interacts with Ebolavirus envelope glycoprotein GP. As to quaternary structure, (Microbial infection) Interacts with Zika virus envelope protein E. Ubiquitinated at two lysine residues Lys-338 and Lys-346 on its cytoplasmic domain. Ubiquitination promotes receptor endocytosis and target receptors for lysosomal degradation and termination of receptor signaling. Post-translationally, (Microbial infection) Ubiquitination is required for Dengue virus endocytosis. In terms of tissue distribution, widely expressed, with highest levels in kidney and testis. Expressed by activated CD4+ T-cells during the development of helper T-cells responses.

It is found in the cell membrane. Phosphatidylserine receptor that plays an important functional role in regulatory B-cells homeostasis including generation, expansion and suppressor functions. As P-selectin/SELPLG ligand, plays a specialized role in activated but not naive T-cell trafficking during inflammatory responses. Controls thereby T-cell accumulation in the inflamed central nervous system (CNS) and the induction of autoimmune disease. Also regulates expression of various anti-inflammatory cytokines and co-inhibitory ligands including IL10. Acts as a regulator of T-cell proliferation. May play a role in kidney injury and repair. Functionally, (Microbial infection) Acts as a receptor for Hepatitis A virus. In terms of biological role, (Microbial infection) Acts as a receptor for Ebolavirus and Marburg virus by binding exposed phosphatidyl-serine at the surface of virion membrane. Serves as a dual receptor for Ebolavirus by also interacting with envelope glycoprotein GP. Its function is as follows. (Microbial infection) Acts as a receptor for Dengue virus by binding exposed phosphatidyl-serine at the surface of virion membrane. TIM1 and Dengue virus are co-internalized during virus entry. (Microbial infection) Acts as a receptor for Zika virus by binding to envelope protein E. Functionally, (Microbial infection) Plays a positive role in Chikungunya virus cell entry. The sequence is that of Hepatitis A virus cellular receptor 1 (HAVCR1) from Homo sapiens (Human).